A 263-amino-acid polypeptide reads, in one-letter code: tRNA pseudouridine synthase A (263 aa).

Aspartate 53 (nucleophile) is an active-site residue. Tyrosine 111 contacts substrate. The disordered stretch occupies residues 232–263 (TAPGHGLISGRSNMTNGKLENNKTTNPCVTKY). The segment covering 241-263 (GRSNMTNGKLENNKTTNPCVTKY) has biased composition (polar residues).

Belongs to the tRNA pseudouridine synthase TruA family. Homodimer.

It catalyses the reaction uridine(38/39/40) in tRNA = pseudouridine(38/39/40) in tRNA. In terms of biological role, formation of pseudouridine at positions 38, 39 and 40 in the anticodon stem and loop of transfer RNAs. The sequence is that of tRNA pseudouridine synthase A from Halalkalibacterium halodurans (strain ATCC BAA-125 / DSM 18197 / FERM 7344 / JCM 9153 / C-125) (Bacillus halodurans).